Reading from the N-terminus, the 217-residue chain is Urease accessory protein UreG (217 aa).

13 to 20 contacts GTP; the sequence is GPVGSGKT.

This sequence belongs to the SIMIBI class G3E GTPase family. UreG subfamily. In terms of assembly, homodimer. UreD, UreF and UreG form a complex that acts as a GTP-hydrolysis-dependent molecular chaperone, activating the urease apoprotein by helping to assemble the nickel containing metallocenter of UreC. The UreE protein probably delivers the nickel.

The protein resides in the cytoplasm. In terms of biological role, facilitates the functional incorporation of the urease nickel metallocenter. This process requires GTP hydrolysis, probably effectuated by UreG. The sequence is that of Urease accessory protein UreG from Frankia alni (strain DSM 45986 / CECT 9034 / ACN14a).